Here is a 550-residue protein sequence, read N- to C-terminus: MVPKADSGAFLLLFLLVLTVTEPLRPELRCNPGQFACRSGTIQCIPLPWQCDGWATCEDESDEANCPEVTGEVRPHHGKEAVDPRQGRARGGDPSHFHAVNVAQPVRFSSFLGKCPTGWHHYEGTASCYRVYLSGENYWDAAQTCQRLNGSLATFSTDQELRFVLAQEWDQPERSFGWKDQRKLWVGYQYVITGRNRSLEGRWEVAFKGSSEVFLPPDPIFASAMSENDNVFCAQLQCFHFPTLRHHDLHSWHAESCYEKSSFLCKRSQTCVDIKDNVVDEGFYFTPKGDDPCLSCTCHGGEPEMCVAALCERPQGCQQYRKDPKECCKFMCLDPDGNSLFDSMASGMRLVVSCISSFLILSLLLFMVHRLRQRRRERIESLIGANLHHFNLGRRIPGFDYGPDGFGTGLTPLHLSDDGEGGTFHFHDPPPPYTAYKYPDIGQPDDPPPPYEASIHPDSVFYDPADDDAFEPVEVSLPAPGDGGSEGALLRRLEQPLPTAGASLADLEDSADSSSALLVPPDPAQSGSTPAAEALPGGGRHSRSSLNTVV.

The first 20 residues, Met1–Val20, serve as a signal peptide directing secretion. Over Thr21–Arg349 the chain is Extracellular. Residues Leu28–Glu68 enclose the LDL-receptor class A domain. Intrachain disulfides connect Cys30–Cys44, Cys37–Cys57, and Cys51–Cys66. The tract at residues Val69 to Gly92 is disordered. The span at Gly71–Gly92 shows a compositional bias: basic and acidic residues. Residues Cys115–Phe241 enclose the C-type lectin domain. Disulfide bonds link Cys145/Cys265 and Cys233/Cys257. N-linked (GlcNAc...) asparagine glycans are attached at residues Asn149 and Asn196. The region spanning Thr270–Leu333 is the VWFC domain. Residues Leu350–Val368 form a helical membrane-spanning segment. Topologically, residues His369 to Val550 are cytoplasmic. At Ser381 the chain carries Phosphoserine. The tract at residues Ala500 to Val550 is disordered.

Predominantly expressed in brain, heart, lung and fetal kidney. Low levels in liver and adult kidney.

It is found in the membrane. Its function is as follows. Putative adhesion receptor, that could be involved in cell-cell or cell-matrix interactions required for normal cell differentiation and migration. The chain is Integral membrane protein DGCR2/IDD (DGCR2) from Homo sapiens (Human).